The primary structure comprises 109 residues: Spermidine export protein MdtI (109 aa).

4 helical membrane passes run 6 to 26, 36 to 56, 64 to 84, and 88 to 108; these read WVHA…NVFL, IFGL…SQAV, AYAL…WILF, and LNRK…MVKL.

The protein belongs to the drug/metabolite transporter (DMT) superfamily. Small multidrug resistance (SMR) (TC 2.A.7.1) family. MdtI subfamily. Forms a complex with MdtJ.

The protein resides in the cell inner membrane. Its function is as follows. Catalyzes the excretion of spermidine. In Shigella dysenteriae serotype 1 (strain Sd197), this protein is Spermidine export protein MdtI.